A 394-amino-acid chain; its full sequence is Growth-regulating factor 4 (394 aa).

The 36-residue stretch at 64–99 (PFTAAQYEELEQQALIYKYLVAGVPVPPDLVLPIRR) folds into the QLQ domain. The WRC domain occupies 125–169 (DPEPGRCRRTDGKKWRCSKEAAPDSKYCERHMHRGRNRSRKPVET). Short sequence motifs (bipartite nuclear localization signal) lie at residues 130 to 140 (RCRRTDGKKWR) and 158 to 165 (RGRNRSRK). Residues 156 to 180 (MHRGRNRSRKPVETQLVAQSQPPSS) form a disordered region. A compositionally biased stretch (low complexity) spans 170–180 (QLVAQSQPPSS).

This sequence belongs to the GRF family. In terms of assembly, interacts with GIF1. Interacts with GSK2. Expressed in stems. Expressed in panicles.

Its subcellular location is the nucleus. Transactivation activity is repressed by GSK2. In terms of biological role, transcription activator that plays a role in the regulation of meristematic function in leaves, stems and inflorescences. Transcription activator that plays a regulatory role in grain development. Positively regulates grain size by promoting cell division and expansion, leading to increased grain length and width. Positively regulates the expression of genes promoting cell proliferation. Activates the expression of expansin genes to promote cell expansion and grain size. May promote grain size by activating brassinosteroid responses. Component of a network formed by the microRNA396 (miRNA396), the GRFs and their interacting factors (GIFs) acting in the regulation of meristem function, at least partially through the control of cell proliferation. Component of the miRNA396c-GRF4-GIF1 regulatory module that plays an important role in grain size determination. This is Growth-regulating factor 4 from Oryza sativa subsp. japonica (Rice).